The chain runs to 296 residues: Polyamine aminopropyltransferase (296 aa).

The region spanning 16–251 (HLWYFEYYTG…GMWSYTFASK (236 aa)) is the PABS domain. Q46 provides a ligand contact to S-methyl-5'-thioadenosine. Residues H77 and D101 each coordinate spermidine. S-methyl-5'-thioadenosine-binding positions include E121 and 152 to 153 (NG). The active-site Proton acceptor is the D170. 170-173 (DSTD) provides a ligand contact to spermidine.

It belongs to the spermidine/spermine synthase family. In terms of assembly, homodimer or homotetramer.

The protein resides in the cytoplasm. The catalysed reaction is S-adenosyl 3-(methylsulfanyl)propylamine + putrescine = S-methyl-5'-thioadenosine + spermidine + H(+). The protein operates within amine and polyamine biosynthesis; spermidine biosynthesis; spermidine from putrescine: step 1/1. Its function is as follows. Catalyzes the irreversible transfer of a propylamine group from the amino donor S-adenosylmethioninamine (decarboxy-AdoMet) to putrescine (1,4-diaminobutane) to yield spermidine. The protein is Polyamine aminopropyltransferase of Thermotoga neapolitana (strain ATCC 49049 / DSM 4359 / NBRC 107923 / NS-E).